The primary structure comprises 177 residues: Large ribosomal subunit protein uL6 (177 aa).

It belongs to the universal ribosomal protein uL6 family. Part of the 50S ribosomal subunit.

Its function is as follows. This protein binds to the 23S rRNA, and is important in its secondary structure. It is located near the subunit interface in the base of the L7/L12 stalk, and near the tRNA binding site of the peptidyltransferase center. This is Large ribosomal subunit protein uL6 from Dinoroseobacter shibae (strain DSM 16493 / NCIMB 14021 / DFL 12).